The chain runs to 156 residues: Small ribosomal subunit protein uS7 (156 aa).

The protein belongs to the universal ribosomal protein uS7 family. Part of the 30S ribosomal subunit. Contacts proteins S9 and S11.

One of the primary rRNA binding proteins, it binds directly to 16S rRNA where it nucleates assembly of the head domain of the 30S subunit. Is located at the subunit interface close to the decoding center, probably blocks exit of the E-site tRNA. The sequence is that of Small ribosomal subunit protein uS7 from Picosynechococcus sp. (strain ATCC 27264 / PCC 7002 / PR-6) (Agmenellum quadruplicatum).